The following is a 249-amino-acid chain: (S)-1-Phenylethanol dehydrogenase (249 aa).

NAD(+) contacts are provided by residues 17–19 (NGI), Asp38, 61–63 (CDV), Asn89, and Tyr93. Substrate is bound at residue Ser141. Residue Tyr154 is the Proton acceptor of the active site. NAD(+) contacts are provided by residues Lys158, 184–187 (PSLV), and Thr191.

This sequence belongs to the short-chain dehydrogenases/reductases (SDR) family. As to quaternary structure, homotetramer.

It carries out the reaction (S)-1-phenylethanol + NAD(+) = acetophenone + NADH + H(+). Catalyzes the NAD-dependent stereospecific oxidation of (S)-1-phenylethanol to acetophenone in the degradation of ethylbenzene. This chain is (S)-1-Phenylethanol dehydrogenase (ped), found in Aromatoleum aromaticum (strain DSM 19018 / LMG 30748 / EbN1) (Azoarcus sp. (strain EbN1)).